The following is a 293-amino-acid chain: Ethanolamine ammonia-lyase small subunit (293 aa).

Adenosylcob(III)alamin is bound by residues Val207 and Glu228.

It belongs to the EutC family. In terms of assembly, the basic unit is a heterodimer which dimerizes to form tetramers. The heterotetramers trimerize; 6 large subunits form a core ring with 6 small subunits projecting outwards. Requires adenosylcob(III)alamin as cofactor.

The protein localises to the bacterial microcompartment. The catalysed reaction is ethanolamine = acetaldehyde + NH4(+). It participates in amine and polyamine degradation; ethanolamine degradation. Functionally, catalyzes the deamination of various vicinal amino-alcohols to oxo compounds. Allows this organism to utilize ethanolamine as the sole source of nitrogen and carbon in the presence of external vitamin B12. This chain is Ethanolamine ammonia-lyase small subunit, found in Listeria innocua serovar 6a (strain ATCC BAA-680 / CLIP 11262).